A 104-amino-acid polypeptide reads, in one-letter code: Transcription and mRNA export factor ENY2 (104 aa).

The span at 1 to 14 shows a compositional bias: basic and acidic residues; the sequence is MADYGSDKKSRDNQ. A disordered region spans residues 1-22; it reads MADYGSDKKSRDNQMRSAINQQ.

The protein belongs to the ENY2 family. As to quaternary structure, component of the nuclear pore complex (NPC)-associated TREX-2 complex (transcription and export complex 2). Component of the SAGA transcription coactivator-HAT complex. Within the SAGA complex, participates in a subcomplex of SAGA called the DUB module (deubiquitination module).

Its subcellular location is the nucleus. The protein resides in the nucleoplasm. Involved in mRNA export coupled transcription activation by association with both the TREX-2 and the SAGA complexes. The transcription regulatory histone acetylation (HAT) complex SAGA is a multiprotein complex that activates transcription by remodeling chromatin and mediating histone acetylation and deubiquitination. Within the SAGA complex, participates in a subcomplex that specifically deubiquitinates histones. The SAGA complex is recruited to specific gene promoters by activators, where it is required for transcription. The TREX-2 complex functions in docking export-competent ribonucleoprotein particles (mRNPs) to the nuclear entrance of the nuclear pore complex (nuclear basket). TREX-2 participates in mRNA export and accurate chromatin positioning in the nucleus by tethering genes to the nuclear periphery. This chain is Transcription and mRNA export factor ENY2, found in Ciona intestinalis (Transparent sea squirt).